Consider the following 424-residue polypeptide: Glutamate-1-semialdehyde 2,1-aminomutase (424 aa).

Lys263 is subject to N6-(pyridoxal phosphate)lysine.

The protein belongs to the class-III pyridoxal-phosphate-dependent aminotransferase family. HemL subfamily. Homodimer. Pyridoxal 5'-phosphate serves as cofactor.

It localises to the cytoplasm. The catalysed reaction is (S)-4-amino-5-oxopentanoate = 5-aminolevulinate. The protein operates within porphyrin-containing compound metabolism; protoporphyrin-IX biosynthesis; 5-aminolevulinate from L-glutamyl-tRNA(Glu): step 2/2. The polypeptide is Glutamate-1-semialdehyde 2,1-aminomutase (Campylobacter jejuni subsp. doylei (strain ATCC BAA-1458 / RM4099 / 269.97)).